Here is a 364-residue protein sequence, read N- to C-terminus: Fructose-bisphosphate aldolase, non-muscle type (364 aa).

Substrate is bound by residues Arg-56 and Lys-147. The active-site Schiff-base intermediate with dihydroxyacetone-P is Lys-230.

Belongs to the class I fructose-bisphosphate aldolase family. As to quaternary structure, homotetramer. In terms of tissue distribution, expressed mainly in the liver and also in brain and other tissues, except for the heart muscle.

The enzyme catalyses beta-D-fructose 1,6-bisphosphate = D-glyceraldehyde 3-phosphate + dihydroxyacetone phosphate. It participates in carbohydrate degradation; glycolysis; D-glyceraldehyde 3-phosphate and glycerone phosphate from D-glucose: step 4/4. In Lethenteron camtschaticum (Japanese lamprey), this protein is Fructose-bisphosphate aldolase, non-muscle type.